Reading from the N-terminus, the 173-residue chain is Cytochrome c-type biogenesis protein CcmE (173 aa).

Residues 1–8 (MNPRRKSR) are Cytoplasmic-facing. Residues 9–29 (FKLVIFVVLGIAIASGLMLYA) form a helical; Signal-anchor for type II membrane protein membrane-spanning segment. Residues 30–173 (LRQNIDLFYT…RDRQEKEGAK (144 aa)) lie on the Periplasmic side of the membrane. Positions 131 and 135 each coordinate heme. The interval 152-173 (GIEAADLKGESARDRQEKEGAK) is disordered. Residues 156–173 (ADLKGESARDRQEKEGAK) show a composition bias toward basic and acidic residues.

The protein belongs to the CcmE/CycJ family.

It localises to the cell inner membrane. In terms of biological role, heme chaperone required for the biogenesis of c-type cytochromes. Transiently binds heme delivered by CcmC and transfers the heme to apo-cytochromes in a process facilitated by CcmF and CcmH. This chain is Cytochrome c-type biogenesis protein CcmE, found in Haemophilus influenzae (strain ATCC 51907 / DSM 11121 / KW20 / Rd).